The sequence spans 435 residues: Aspartate--tRNA(Asp/Asn) ligase (435 aa).

Glu163 serves as a coordination point for L-aspartate. The segment at 185-188 (QLYK) is aspartate. Arg206 is an L-aspartate binding site. ATP-binding positions include 206-208 (RAE), 214-216 (RHL), and Glu358. L-aspartate contacts are provided by Ser361 and Arg365. 406–409 (GAER) serves as a coordination point for ATP.

The protein belongs to the class-II aminoacyl-tRNA synthetase family. Type 2 subfamily. Homodimer.

The protein localises to the cytoplasm. The enzyme catalyses tRNA(Asx) + L-aspartate + ATP = L-aspartyl-tRNA(Asx) + AMP + diphosphate. Functionally, aspartyl-tRNA synthetase with relaxed tRNA specificity since it is able to aspartylate not only its cognate tRNA(Asp) but also tRNA(Asn). Reaction proceeds in two steps: L-aspartate is first activated by ATP to form Asp-AMP and then transferred to the acceptor end of tRNA(Asp/Asn). Is slightly more efficient at aminoacylating tRNA(Asn) over tRNA(Asp). This is Aspartate--tRNA(Asp/Asn) ligase (aspS2) from Deinococcus radiodurans (strain ATCC 13939 / DSM 20539 / JCM 16871 / CCUG 27074 / LMG 4051 / NBRC 15346 / NCIMB 9279 / VKM B-1422 / R1).